Consider the following 156-residue polypeptide: Small ribosomal subunit protein uS7 (156 aa).

Belongs to the universal ribosomal protein uS7 family. Part of the 30S ribosomal subunit. Contacts proteins S9 and S11.

Its function is as follows. One of the primary rRNA binding proteins, it binds directly to 16S rRNA where it nucleates assembly of the head domain of the 30S subunit. Is located at the subunit interface close to the decoding center, probably blocks exit of the E-site tRNA. The sequence is that of Small ribosomal subunit protein uS7 from Mesorhizobium japonicum (strain LMG 29417 / CECT 9101 / MAFF 303099) (Mesorhizobium loti (strain MAFF 303099)).